Consider the following 481-residue polypeptide: tRNA:m(4)X modification enzyme TRM13 homolog (481 aa).

The CHHC U11-48K-type zinc finger occupies 56-83; it reads RILCPLDPKHTVYEDQLAKHLKKCNSRE. Cys59, His65, His75, and Cys79 together coordinate Zn(2+). Residues 113 to 140 adopt a coiled-coil conformation; it reads SLSEEQLENLIKKLRKASEGLNSTHEDH. 2 disordered regions span residues 296 to 319 and 379 to 414; these read AKRI…SEKD and LEGS…TDSL. A compositionally biased stretch (basic and acidic residues) spans 385-407; sequence TPERKDAQRDENEEHDDGGDRLT.

The protein belongs to the methyltransferase TRM13 family.

It catalyses the reaction cytidine(4) in tRNA(Pro) + S-adenosyl-L-methionine = 2'-O-methylcytidine(4) in tRNA(Pro) + S-adenosyl-L-homocysteine + H(+). The catalysed reaction is cytidine(4) in tRNA(Gly)(GCC) + S-adenosyl-L-methionine = 2'-O-methylcytidine(4) in tRNA(Gly)(GCC) + S-adenosyl-L-homocysteine + H(+). The enzyme catalyses adenosine(4) in tRNA(His) + S-adenosyl-L-methionine = 2'-O-methyladenosine(4) in tRNA(His) + S-adenosyl-L-homocysteine + H(+). In terms of biological role, tRNA methylase which 2'-O-methylates cytidine(4) in tRNA(Pro) and tRNA(Gly)(GCC), and adenosine(4) in tRNA(His). The polypeptide is tRNA:m(4)X modification enzyme TRM13 homolog (Trmt13) (Mus musculus (Mouse)).